A 512-amino-acid polypeptide reads, in one-letter code: Probable cytosol aminopeptidase (512 aa).

Mn(2+) contacts are provided by Lys-284 and Asp-289. The active site involves Lys-296. Mn(2+) contacts are provided by Asp-307, Asp-366, and Glu-368. The active site involves Arg-370.

The protein belongs to the peptidase M17 family. Requires Mn(2+) as cofactor.

It localises to the cytoplasm. It catalyses the reaction Release of an N-terminal amino acid, Xaa-|-Yaa-, in which Xaa is preferably Leu, but may be other amino acids including Pro although not Arg or Lys, and Yaa may be Pro. Amino acid amides and methyl esters are also readily hydrolyzed, but rates on arylamides are exceedingly low.. The enzyme catalyses Release of an N-terminal amino acid, preferentially leucine, but not glutamic or aspartic acids.. Presumably involved in the processing and regular turnover of intracellular proteins. Catalyzes the removal of unsubstituted N-terminal amino acids from various peptides. This is Probable cytosol aminopeptidase from Cupriavidus necator (strain ATCC 17699 / DSM 428 / KCTC 22496 / NCIMB 10442 / H16 / Stanier 337) (Ralstonia eutropha).